The sequence spans 380 residues: Queuine tRNA-ribosyltransferase (380 aa).

Asp96 (proton acceptor) is an active-site residue. Substrate is bound by residues 96-100 (DSGGF), Asp150, Gln193, and Gly220. Residues 251–257 (GVGAPDS) are RNA binding. Asp270 serves as the catalytic Nucleophile. The segment at 275-279 (TRIAR) is RNA binding; important for wobble base 34 recognition. Positions 308, 310, 313, and 339 each coordinate Zn(2+).

It belongs to the queuine tRNA-ribosyltransferase family. Homodimer. Within each dimer, one monomer is responsible for RNA recognition and catalysis, while the other monomer binds to the replacement base PreQ1. The cofactor is Zn(2+).

It carries out the reaction 7-aminomethyl-7-carbaguanine + guanosine(34) in tRNA = 7-aminomethyl-7-carbaguanosine(34) in tRNA + guanine. It participates in tRNA modification; tRNA-queuosine biosynthesis. Its function is as follows. Catalyzes the base-exchange of a guanine (G) residue with the queuine precursor 7-aminomethyl-7-deazaguanine (PreQ1) at position 34 (anticodon wobble position) in tRNAs with GU(N) anticodons (tRNA-Asp, -Asn, -His and -Tyr). Catalysis occurs through a double-displacement mechanism. The nucleophile active site attacks the C1' of nucleotide 34 to detach the guanine base from the RNA, forming a covalent enzyme-RNA intermediate. The proton acceptor active site deprotonates the incoming PreQ1, allowing a nucleophilic attack on the C1' of the ribose to form the product. After dissociation, two additional enzymatic reactions on the tRNA convert PreQ1 to queuine (Q), resulting in the hypermodified nucleoside queuosine (7-(((4,5-cis-dihydroxy-2-cyclopenten-1-yl)amino)methyl)-7-deazaguanosine). The polypeptide is Queuine tRNA-ribosyltransferase (Streptococcus mutans serotype c (strain ATCC 700610 / UA159)).